The following is a 383-amino-acid chain: tRNA-specific 2-thiouridylase MnmA (383 aa).

ATP is bound by residues 9–16 (GMSGGVDS) and Met-35. Residues 95-97 (NPD) are interaction with target base in tRNA. The Nucleophile role is filled by Cys-100. Residues Cys-100 and Cys-196 are joined by a disulfide bond. Gly-124 lines the ATP pocket. The interval 146–148 (KDQ) is interaction with tRNA. Residue Cys-196 is the Cysteine persulfide intermediate of the active site. Residues 308–309 (RY) are interaction with tRNA.

The protein belongs to the MnmA/TRMU family.

The protein localises to the cytoplasm. The catalysed reaction is S-sulfanyl-L-cysteinyl-[protein] + uridine(34) in tRNA + AH2 + ATP = 2-thiouridine(34) in tRNA + L-cysteinyl-[protein] + A + AMP + diphosphate + H(+). Functionally, catalyzes the 2-thiolation of uridine at the wobble position (U34) of tRNA, leading to the formation of s(2)U34. The polypeptide is tRNA-specific 2-thiouridylase MnmA (Burkholderia pseudomallei (strain 1106a)).